The following is a 314-amino-acid chain: DNA-directed RNA polymerase subunit alpha (314 aa).

The tract at residues M1–S228 is alpha N-terminal domain (alpha-NTD). Residues P242 to D314 form an alpha C-terminal domain (alpha-CTD) region.

It belongs to the RNA polymerase alpha chain family. As to quaternary structure, homodimer. The RNAP catalytic core consists of 2 alpha, 1 beta, 1 beta' and 1 omega subunit. When a sigma factor is associated with the core the holoenzyme is formed, which can initiate transcription.

It carries out the reaction RNA(n) + a ribonucleoside 5'-triphosphate = RNA(n+1) + diphosphate. Functionally, DNA-dependent RNA polymerase catalyzes the transcription of DNA into RNA using the four ribonucleoside triphosphates as substrates. The chain is DNA-directed RNA polymerase subunit alpha from Leuconostoc mesenteroides subsp. mesenteroides (strain ATCC 8293 / DSM 20343 / BCRC 11652 / CCM 1803 / JCM 6124 / NCDO 523 / NBRC 100496 / NCIMB 8023 / NCTC 12954 / NRRL B-1118 / 37Y).